Here is a 460-residue protein sequence, read N- to C-terminus: UDP-N-acetylmuramoylalanine--D-glutamate ligase (460 aa).

120–126 (GSNGKTT) lines the ATP pocket.

The protein belongs to the MurCDEF family.

It is found in the cytoplasm. It carries out the reaction UDP-N-acetyl-alpha-D-muramoyl-L-alanine + D-glutamate + ATP = UDP-N-acetyl-alpha-D-muramoyl-L-alanyl-D-glutamate + ADP + phosphate + H(+). The protein operates within cell wall biogenesis; peptidoglycan biosynthesis. Cell wall formation. Catalyzes the addition of glutamate to the nucleotide precursor UDP-N-acetylmuramoyl-L-alanine (UMA). The protein is UDP-N-acetylmuramoylalanine--D-glutamate ligase of Lactobacillus delbrueckii subsp. bulgaricus (strain ATCC 11842 / DSM 20081 / BCRC 10696 / JCM 1002 / NBRC 13953 / NCIMB 11778 / NCTC 12712 / WDCM 00102 / Lb 14).